A 422-amino-acid polypeptide reads, in one-letter code: AP-1 complex subunit mu-1-I (422 aa).

The MHD domain maps to 167-420 (KNEVFLDVIE…ITQNGEYEMR (254 aa)).

The protein belongs to the adaptor complexes medium subunit family. As to quaternary structure, adaptor protein complex 1 (AP-1) is a heterotetramer composed of two large adaptins (gamma- and beta'-type subunits), a medium adaptin (mu-type subunit AP47) and a small adaptin (sigma-type subunit AP19). Interacts (via N-terminus) with kvs-4. In terms of tissue distribution, expressed in the cholinergic motor neuron DA9.

Its subcellular location is the golgi apparatus. The protein resides in the cytoplasmic vesicle. The protein localises to the clathrin-coated vesicle membrane. It localises to the cell projection. It is found in the dendrite. Functionally, component of the adaptor complexes which link clathrin to receptors in coated vesicles. Clathrin-associated protein complexes are believed to interact with the cytoplasmic tails of membrane proteins, leading to their selection and concentration. Required for many aspects of development and behavior, including negative regulation of vulval differentiation. Required for the dendritic localization of potassium channel kvs-4 in the cholinergic motor neuron DA9. This chain is AP-1 complex subunit mu-1-I (unc-101), found in Caenorhabditis elegans.